A 568-amino-acid polypeptide reads, in one-letter code: Natural resistance-associated macrophage protein 2 (568 aa).

Positions 1-20 (MVLDPEEKIPDDGASGDHGD) are enriched in basic and acidic residues. The interval 1 to 45 (MVLDPEEKIPDDGASGDHGDSASLGAINPAYSNSSLPHSTGDSEE) is disordered. Residues 1–69 (MVLDPEEKIP…EEYSCFSFRK (69 aa)) are Cytoplasmic-facing. Over residues 30-40 (AYSNSSLPHST) the composition is skewed to polar residues. The helical transmembrane segment at 70 to 90 (LWAFTGPGFLMSIAYLDPGNI) threads the bilayer. At 91 to 95 (ESDLQ) the chain is on the extracellular side. The chain crosses the membrane as a helical span at residues 96–117 (SGAVAGFKLLWVLLLATIVGLL). Topologically, residues 118–154 (LQRLAARLGVVTGLHLAEVCHRQYPKVPRIILWLMVE) are cytoplasmic. Residues 155-175 (LAIIGSDMQEVIGSAIAINLL) traverse the membrane as a helical segment. The Extracellular portion of the chain corresponds to 176–179 (SAGR). A helical membrane pass occupies residues 180-194 (VPLYGGVLITIADTF). Over 195 to 208 (VFLFLDKYGLRKLE) the chain is Cytoplasmic. The chain crosses the membrane as a helical span at residues 209-229 (AFFGFLITIMALTFGYEYVTV). Topologically, residues 230 to 255 (KPSQSQVLRGMFVPSCSGCHTPQVEQ) are extracellular. A helical membrane pass occupies residues 256–276 (AVGIVGAVIMPHNMYLHSALV). Residues 277–301 (KSRQVNRANKQEVREANKYFFIESC) lie on the Cytoplasmic side of the membrane. A helical membrane pass occupies residues 302–322 (IALFVSFIINVFVVSVFAEAF). The Extracellular segment spans residues 323 to 360 (FEKTNEQVVEVCRNSSSPHADLFPNDNSTLAVDIYKGG). Asn-336 and Asn-349 each carry an N-linked (GlcNAc...) asparagine glycan. Residues 361 to 381 (VVLGCYFGPAALYIWAVGILA) form a helical membrane-spanning segment. Residues 382–408 (AGQSSTMTGTYSGQFVMEGFLNLKWSR) are Cytoplasmic-facing. Residues 409–429 (FARVILTRSIAIIPTLLVAVF) traverse the membrane as a helical segment. The Extracellular portion of the chain corresponds to 430-440 (QDVEHLTGMND). A helical transmembrane segment spans residues 441-461 (FLNVLQSLQLPFALIPILTFT). Residues 462–482 (SLRPVMSEFSNGIGWRIAGGI) are Cytoplasmic-facing. A helical transmembrane segment spans residues 483–503 (LVLLVCSINMYFVVVYVQELG). The Extracellular segment spans residues 504–506 (HVA). Residues 507–527 (LYVVAAVVSVAYLGFVFYLGW) form a helical membrane-spanning segment. The Cytoplasmic segment spans residues 528–568 (QCLIALGLSFLDCGRSYHLGLTARPEIYLLNTVDAVSLVSR). The segment at 555–559 (YLLNT) is required for early endosome targeting. Residues Leu-556, Ser-564, and Ser-567 each carry the phosphoserine modification.

This sequence belongs to the NRAMP family. In terms of assembly, forms a complex with NDFIP1 and NEDD4L, in cortical neurons, in response to iron and cobalt exposure; this interaction leads to SLC11A2 ubiquitination by NEDD4L and proteasome-dependent degradation. Interacts with NDFIP1, NDFIP2 and WWP2; this interaction leads to SLC11A2 ubiquitination by WWP2 and subsequent proteasome-dependent degradation. Interacts with COX2 and TOM6 at the outer mitochondrion membrane. Interacts with ARRDC1; this interaction regulates the incorporation of SLC11A2 into extracellular vesicles through an ubiquitination-dependent mechanism. Interacts with ARRDC4; controls the incorporation of SLC11A2 into extracellular vesicles through an ubiquitination-dependent mechanism. Post-translationally, ubiquitinated by WWP2. N-glycosylated. In terms of tissue distribution, ubiquitous. Expressed in proximal intestine, kidney and brain.

Its subcellular location is the golgi apparatus. It is found in the trans-Golgi network membrane. It localises to the early endosome membrane. The protein resides in the recycling endosome membrane. The protein localises to the late endosome membrane. Its subcellular location is the lysosome membrane. It is found in the apical cell membrane. It localises to the mitochondrion outer membrane. The protein resides in the extracellular vesicle membrane. It catalyses the reaction Fe(2+)(in) + H(+)(in) = Fe(2+)(out) + H(+)(out). The enzyme catalyses Cd(2+)(out) + H(+)(out) = Cd(2+)(in) + H(+)(in). It carries out the reaction Co(2+)(out) + H(+)(out) = Co(2+)(in) + H(+)(in). The catalysed reaction is Mn(2+)(in) + H(+)(in) = Mn(2+)(out) + H(+)(out). It catalyses the reaction Zn(2+)(out) + H(+)(out) = Zn(2+)(in) + H(+)(in). The enzyme catalyses Ni(2+)(out) + H(+)(out) = Ni(2+)(in) + H(+)(in). It carries out the reaction H(+)(in) = H(+)(out). The catalysed reaction is Fe(2+)(in) = Fe(2+)(out). Inhibited by 2-(3-carbamimidoylsulfanylmethyl-benzyl)-isothiourea. In terms of biological role, proton-coupled metal ion symporter operating with a proton to metal ion stoichiometry of 1:1. Selectively transports various divalent metal cations, in decreasing affinity: Cd(2+) &gt; Fe(2+) &gt; Co(2+), Mn(2+) &gt;&gt; Zn(2+), Ni(2+), VO(2+). Essential for maintenance of iron homeostasis by modulating intestinal absorption of dietary Fe(2+) and TF-associated endosomal Fe(2+) transport in erythroid precursors and other cells. Enables Fe(2+) and Mn(2+) ion entry into mitochondria, and is thus expected to promote mitochondrial heme synthesis, iron-sulfur cluster biogenesis and antioxidant defense. Can mediate uncoupled fluxes of either protons or metal ions. The protein is Natural resistance-associated macrophage protein 2 (Slc11a2) of Rattus norvegicus (Rat).